Reading from the N-terminus, the 456-residue chain is Bifunctional protein GlmU (456 aa).

The pyrophosphorylase stretch occupies residues 1–229 (MLNVVILAAG…GWETLGVNSR (229 aa)). UDP-N-acetyl-alpha-D-glucosamine-binding positions include 7–10 (LAAG), Lys-21, Gln-73, 78–79 (GT), 103–105 (YGD), Gly-139, Glu-154, Asn-169, and Asn-227. Residue Asp-105 participates in Mg(2+) binding. Asn-227 serves as a coordination point for Mg(2+). The segment at 230–250 (VQQAELERRWQQEQARRQLEA) is linker. The tract at residues 251–456 (GVTLADPARF…EGWQRPQKKS (206 aa)) is N-acetyltransferase. UDP-N-acetyl-alpha-D-glucosamine is bound by residues Arg-333 and Lys-351. His-363 functions as the Proton acceptor in the catalytic mechanism. UDP-N-acetyl-alpha-D-glucosamine-binding residues include Tyr-366 and Asn-377. Residues Ala-380, 386–387 (NY), Ser-405, Ala-423, and Arg-440 contribute to the acetyl-CoA site.

This sequence in the N-terminal section; belongs to the N-acetylglucosamine-1-phosphate uridyltransferase family. In the C-terminal section; belongs to the transferase hexapeptide repeat family. Homotrimer. The cofactor is Mg(2+).

The protein localises to the cytoplasm. The enzyme catalyses alpha-D-glucosamine 1-phosphate + acetyl-CoA = N-acetyl-alpha-D-glucosamine 1-phosphate + CoA + H(+). It carries out the reaction N-acetyl-alpha-D-glucosamine 1-phosphate + UTP + H(+) = UDP-N-acetyl-alpha-D-glucosamine + diphosphate. It participates in nucleotide-sugar biosynthesis; UDP-N-acetyl-alpha-D-glucosamine biosynthesis; N-acetyl-alpha-D-glucosamine 1-phosphate from alpha-D-glucosamine 6-phosphate (route II): step 2/2. It functions in the pathway nucleotide-sugar biosynthesis; UDP-N-acetyl-alpha-D-glucosamine biosynthesis; UDP-N-acetyl-alpha-D-glucosamine from N-acetyl-alpha-D-glucosamine 1-phosphate: step 1/1. The protein operates within bacterial outer membrane biogenesis; LPS lipid A biosynthesis. Catalyzes the last two sequential reactions in the de novo biosynthetic pathway for UDP-N-acetylglucosamine (UDP-GlcNAc). The C-terminal domain catalyzes the transfer of acetyl group from acetyl coenzyme A to glucosamine-1-phosphate (GlcN-1-P) to produce N-acetylglucosamine-1-phosphate (GlcNAc-1-P), which is converted into UDP-GlcNAc by the transfer of uridine 5-monophosphate (from uridine 5-triphosphate), a reaction catalyzed by the N-terminal domain. The protein is Bifunctional protein GlmU of Bordetella petrii (strain ATCC BAA-461 / DSM 12804 / CCUG 43448).